We begin with the raw amino-acid sequence, 689 residues long: DNA ligase (689 aa).

NAD(+)-binding positions include 40–44 (DAEYD), 89–90 (SL), and Glu121. Lys123 acts as the N6-AMP-lysine intermediate in catalysis. Residues Arg144, Glu179, Lys295, and Lys319 each contribute to the NAD(+) site. The Zn(2+) site is built by Cys413, Cys416, Cys431, and Cys437. A BRCT domain is found at 610–689 (REQSSLTGKI…AEWLTLVRDI (80 aa)).

The protein belongs to the NAD-dependent DNA ligase family. LigA subfamily. The cofactor is Mg(2+). Mn(2+) is required as a cofactor.

It carries out the reaction NAD(+) + (deoxyribonucleotide)n-3'-hydroxyl + 5'-phospho-(deoxyribonucleotide)m = (deoxyribonucleotide)n+m + AMP + beta-nicotinamide D-nucleotide.. Functionally, DNA ligase that catalyzes the formation of phosphodiester linkages between 5'-phosphoryl and 3'-hydroxyl groups in double-stranded DNA using NAD as a coenzyme and as the energy source for the reaction. It is essential for DNA replication and repair of damaged DNA. The protein is DNA ligase of Rickettsia bellii (strain RML369-C).